The sequence spans 335 residues: Galactosylgalactosylxylosylprotein 3-beta-glucuronosyltransferase 3 (335 aa).

Topologically, residues 1-7 (MKLKLKN) are cytoplasmic. The helical; Signal-anchor for type II membrane protein transmembrane segment at 8–28 (VFLAYFLVSIAGLLYALVQLG) threads the bilayer. Residues 29–335 (QPCDCLPPLR…GQGSDPAIEV (307 aa)) are Lumenal-facing. Mn(2+) is bound at residue Asp196. Glu281 functions as the Proton acceptor in the catalytic mechanism. N-linked (GlcNAc...) asparagine glycosylation is present at Asn300. The span at 312 to 322 (EKPKMKQEEQL) shows a compositional bias: basic and acidic residues. The disordered stretch occupies residues 312-335 (EKPKMKQEEQLQRQGQGSDPAIEV).

The protein belongs to the glycosyltransferase 43 family. Homodimer; disulfide-linked. Interacts with PXYLP1; the interaction increases the 2-phosphoxylose phosphatase activity of PXYLP1 during completion of linkage region formation in a B3GAT3-mediated manner. Mn(2+) is required as a cofactor. Post-translationally, N-glycosylated. Liver, brain and heart. Moderate expression seen in lung, skeletal muscle, kidney and testis.

It localises to the golgi apparatus membrane. The protein resides in the golgi apparatus. The protein localises to the cis-Golgi network. It catalyses the reaction 3-O-(beta-D-galactosyl-(1-&gt;3)-beta-D-galactosyl-(1-&gt;4)-beta-D-xylosyl)-L-seryl-[protein] + UDP-alpha-D-glucuronate = 3-O-(beta-D-GlcA-(1-&gt;3)-beta-D-Gal-(1-&gt;3)-beta-D-Gal-(1-&gt;4)-beta-D-Xyl)-L-seryl-[protein] + UDP + H(+). It functions in the pathway protein modification; protein glycosylation. Its function is as follows. Glycosaminoglycans biosynthesis. Involved in forming the linkage tetrasaccharide present in heparan sulfate and chondroitin sulfate. Transfers a glucuronic acid moiety from the uridine diphosphate-glucuronic acid (UDP-GlcUA) to the common linkage region trisaccharide Gal-beta-1,3-Gal-beta-1,4-Xyl covalently bound to a Ser residue at the glycosaminylglycan attachment site of proteoglycans. Can also play a role in the biosynthesis of l2/HNK-1 carbohydrate epitope on glycoproteins. Highest activity seen with Gal-beta-1,3-Gal-beta-O-R (where R=naphthalenemethanol or benzyl alcohol). Stimulates 2-phosphoxylose phosphatase activity of PXYLP1 in presence of uridine diphosphate-glucuronic acid (UDP-GlcUA) during completion of linkage region formation. In Cricetulus griseus (Chinese hamster), this protein is Galactosylgalactosylxylosylprotein 3-beta-glucuronosyltransferase 3 (B3GAT3).